The sequence spans 245 residues: uncharacterized protein (245 aa).

A run of 6 helical transmembrane segments spans residues 38–58 (IYPA…AIFI), 68–88 (TIEL…QGYF), 100–120 (IWSL…LILA), 129–149 (VLFI…FVSA), 194–214 (VNNI…FLMN), and 217–237 (IAFI…LIIH).

This sequence belongs to the acyltransferase 3 family.

It localises to the cell membrane. This is an uncharacterized protein from Haemophilus influenzae (strain ATCC 51907 / DSM 11121 / KW20 / Rd).